Reading from the N-terminus, the 111-residue chain is WAP four-disulfide core domain protein 12 (111 aa).

The first 23 residues, 1 to 23 (MGSSSFLVLMVSLVLVTLVAVEG), serve as a signal peptide directing secretion. One can recognise a WAP domain in the interval 27–74 (GIEKAGVCPADNVRCFKSDPPQCHTDQDCLGERKCCYLHCGFKCVIPV). Cystine bridges form between C34–C62, C41–C66, C49–C61, and C55–C70. Residues 80–111 (GGNKDEDVSRPYPEPGWEAKCPGSSSTRCPQK) form a disordered region. A compositionally biased stretch (polar residues) spans 102-111 (GSSSTRCPQK).

As to expression, highly expressed in prostate, skin, lung and esophagus. Weakly expressed in skeletal muscle, epididymis, kidney, trachea, salivary gland, testis and seminal vesicle.

The protein localises to the secreted. Antibacterial protein. Putative acid-stable proteinase inhibitor. This is WAP four-disulfide core domain protein 12 (WFDC12) from Homo sapiens (Human).